The chain runs to 95 residues: MRHYEVMVILDPSLDERTVGPSLENMLGVVKTEGGKIDKVDIWGRRRLAYEIRKQAEGIYAVIDLTASPATVNELDRQLGLNESVLRTKVLRHDK.

It belongs to the bacterial ribosomal protein bS6 family.

In terms of biological role, binds together with bS18 to 16S ribosomal RNA. In Nocardia farcinica (strain IFM 10152), this protein is Small ribosomal subunit protein bS6.